Reading from the N-terminus, the 354-residue chain is Adenine deaminase (354 aa).

Positions 20, 22, and 200 each coordinate Zn(2+). Glu-203 functions as the Proton donor in the catalytic mechanism. Asp-281 is a binding site for Zn(2+). Position 282 (Asp-282) interacts with substrate.

This sequence belongs to the metallo-dependent hydrolases superfamily. Adenosine and AMP deaminases family. Adenine deaminase type 2 subfamily. Requires Zn(2+) as cofactor.

It carries out the reaction adenine + H2O + H(+) = hypoxanthine + NH4(+). Catalyzes the hydrolytic deamination of adenine to hypoxanthine. Plays an important role in the purine salvage pathway and in nitrogen catabolism. The protein is Adenine deaminase of Cupriavidus metallidurans (strain ATCC 43123 / DSM 2839 / NBRC 102507 / CH34) (Ralstonia metallidurans).